The following is a 122-amino-acid chain: Large ribosomal subunit protein uL14 (122 aa).

It belongs to the universal ribosomal protein uL14 family. As to quaternary structure, part of the 50S ribosomal subunit. Forms a cluster with proteins L3 and L19. In the 70S ribosome, L14 and L19 interact and together make contacts with the 16S rRNA in bridges B5 and B8.

Its function is as follows. Binds to 23S rRNA. Forms part of two intersubunit bridges in the 70S ribosome. This Azoarcus sp. (strain BH72) protein is Large ribosomal subunit protein uL14.